The chain runs to 128 residues: Small ribosomal subunit protein uS11 (128 aa).

The protein belongs to the universal ribosomal protein uS11 family. In terms of assembly, part of the 30S ribosomal subunit. Interacts with proteins S7 and S18. Binds to IF-3.

Located on the platform of the 30S subunit, it bridges several disparate RNA helices of the 16S rRNA. Forms part of the Shine-Dalgarno cleft in the 70S ribosome. In Solidesulfovibrio magneticus (strain ATCC 700980 / DSM 13731 / RS-1) (Desulfovibrio magneticus), this protein is Small ribosomal subunit protein uS11.